The chain runs to 192 residues: GTP cyclohydrolase-2 (192 aa).

50 to 54 (RLHSE) provides a ligand contact to GTP. Residues Cys-55, Cys-66, and Cys-68 each contribute to the Zn(2+) site. GTP-binding positions include 92–94 (EGR) and Thr-114. Catalysis depends on Asp-126, which acts as the Proton acceptor. Arg-128 (nucleophile) is an active-site residue. 2 residues coordinate GTP: Thr-149 and Lys-154.

The protein belongs to the GTP cyclohydrolase II family. Requires Zn(2+) as cofactor.

It carries out the reaction GTP + 4 H2O = 2,5-diamino-6-hydroxy-4-(5-phosphoribosylamino)-pyrimidine + formate + 2 phosphate + 3 H(+). It participates in cofactor biosynthesis; riboflavin biosynthesis; 5-amino-6-(D-ribitylamino)uracil from GTP: step 1/4. Catalyzes the conversion of GTP to 2,5-diamino-6-ribosylamino-4(3H)-pyrimidinone 5'-phosphate (DARP), formate and pyrophosphate. This Helicobacter pylori (strain Shi470) protein is GTP cyclohydrolase-2.